Consider the following 197-residue polypeptide: Endoribonuclease YbeY (197 aa).

3 residues coordinate Zn(2+): histidine 156, histidine 160, and histidine 166.

This sequence belongs to the endoribonuclease YbeY family. Requires Zn(2+) as cofactor.

The protein localises to the cytoplasm. Single strand-specific metallo-endoribonuclease involved in late-stage 70S ribosome quality control and in maturation of the 3' terminus of the 16S rRNA. This Cupriavidus metallidurans (strain ATCC 43123 / DSM 2839 / NBRC 102507 / CH34) (Ralstonia metallidurans) protein is Endoribonuclease YbeY.